Consider the following 270-residue polypeptide: Feruloyl esterase C (270 aa).

The first 21 residues, 1–21 (MLRAVLLPTLLAFGAFTPVHG), serve as a signal peptide directing secretion.

Belongs to the faeC family.

It is found in the secreted. It catalyses the reaction feruloyl-polysaccharide + H2O = ferulate + polysaccharide.. Its function is as follows. Involved in degradation of plant cell walls. Hydrolyzes the feruloyl-arabinose ester bond in arabinoxylans, and the feruloyl-galactose ester bond in pectin. Active against paranitrophenyl-acetate, methyl ferulate and wheat arabinoxylan. The polypeptide is Feruloyl esterase C (faeC) (Emericella nidulans (strain FGSC A4 / ATCC 38163 / CBS 112.46 / NRRL 194 / M139) (Aspergillus nidulans)).